A 232-amino-acid chain; its full sequence is LexA repressor (232 aa).

The H-T-H motif DNA-binding region spans 26–46 (FDEMKDALDLRSKSGIHRLIT). Residues S153 and K191 each act as for autocatalytic cleavage activity in the active site.

This sequence belongs to the peptidase S24 family. Homodimer.

It carries out the reaction Hydrolysis of Ala-|-Gly bond in repressor LexA.. In terms of biological role, represses a number of genes involved in the response to DNA damage (SOS response), including recA and lexA. In the presence of single-stranded DNA, RecA interacts with LexA causing an autocatalytic cleavage which disrupts the DNA-binding part of LexA, leading to derepression of the SOS regulon and eventually DNA repair. This chain is LexA repressor, found in Afipia carboxidovorans (strain ATCC 49405 / DSM 1227 / KCTC 32145 / OM5) (Oligotropha carboxidovorans).